The following is a 664-amino-acid chain: 26S rRNA (cytosine-C(5))-methyltransferase nsun-1 (664 aa).

Residues 1 to 105 (MAIVKKKKVS…DDSDAGDHLP (105 aa)) are disordered. Basic residues predominate over residues 38 to 52 (PKKKKLVKKVKKSAK). The span at 53-68 (KAHEEEPIEQVEKLQL) shows a compositional bias: basic and acidic residues. Over residues 84–99 (SDDEDLRDDYSDDDSD) the composition is skewed to acidic residues. S-adenosyl-L-methionine-binding positions include 313 to 319 (CSAPGGK), Asp337, and Asp382. Cys439 functions as the Nucleophile in the catalytic mechanism. The interval 513–664 (KMSKQGVMEK…RRKKMLAKQQ (152 aa)) is disordered. Residues 519-528 (VMEKEKEKAA) show a composition bias toward basic and acidic residues. The span at 541 to 550 (EASESSDDEE) shows a compositional bias: acidic residues. The span at 563 to 572 (KPAKKQQQKK) shows a compositional bias: basic residues. Residues 606–618 (KAAEKQAAVKEDD) show a composition bias toward basic and acidic residues. Composition is skewed to basic residues over residues 627–644 (KRAKKPTQFKSKVPKRAA) and 652–664 (VKNRRKKMLAKQQ).

It belongs to the class I-like SAM-binding methyltransferase superfamily. RsmB/NOP family.

Its subcellular location is the nucleus. The protein localises to the nucleolus. The enzyme catalyses a cytidine in 26S rRNA + S-adenosyl-L-methionine = a 5-methylcytidine in 26S rRNA + S-adenosyl-L-homocysteine + H(+). Its function is as follows. Methyltransferase which methylates the carbon-5 position of cytosine 2982 to 5-methylcytosine (m5C2982) in 26S rRNA. May play a role in the translation of leucine and proline codons. May be required for the translation of specific mRNAs such as mRNAs involved in gonad development, collagen production and cuticle integrity. Plays a role in ensuring the correct localization of the germline-specific protein gld-1 during development. Not required for pre-rRNA processing, the production of mature 5S, 5.8S, 18S or 26S rRNAs or global translation. Plays a role in positively regulating fertility. The chain is 26S rRNA (cytosine-C(5))-methyltransferase nsun-1 from Caenorhabditis elegans.